A 397-amino-acid chain; its full sequence is Flavohemoprotein (397 aa).

Residues 4 to 140 (SFSPHTITLI…IANLLKDREA (137 aa)) form the Globin domain. His87 serves as a coordination point for heme b. Active-site charge relay system residues include Tyr97 and Glu139. The segment at 151 to 397 (GGWIHWRRFV…FGPMDEEMAA (247 aa)) is reductase. An FAD-binding FR-type domain is found at 154–258 (IHWRRFVISK…TPPVGDFFLP (105 aa)). Residues Tyr192 and 207 to 210 (RNYS) contribute to the FAD site. 271–276 (GVGLTP) contributes to the NADP(+) binding site. Residue 387 to 390 (FFGP) coordinates FAD.

This sequence belongs to the globin family. Two-domain flavohemoproteins subfamily. The protein in the C-terminal section; belongs to the flavoprotein pyridine nucleotide cytochrome reductase family. Requires heme b as cofactor. FAD serves as cofactor.

It carries out the reaction 2 nitric oxide + NADPH + 2 O2 = 2 nitrate + NADP(+) + H(+). The enzyme catalyses 2 nitric oxide + NADH + 2 O2 = 2 nitrate + NAD(+) + H(+). Its function is as follows. Is involved in NO detoxification in an aerobic process, termed nitric oxide dioxygenase (NOD) reaction that utilizes O(2) and NAD(P)H to convert NO to nitrate, which protects the bacterium from various noxious nitrogen compounds. Therefore, plays a central role in the inducible response to nitrosative stress. This Xylella fastidiosa (strain 9a5c) protein is Flavohemoprotein.